The primary structure comprises 396 residues: Cathepsin D (396 aa).

The signal sequence occupies residues 1-18 (MKMLLLCVFSALALTNDA). Positions 19–61 (LVRIPLKKFRSIRRQLTDSGKRAEELLADHHSLKYNLSFPASN) are cleaved as a propeptide — activation peptide. A Peptidase A1 domain is found at 76–393 (YYGEIGLGTP…DRDANRVGFA (318 aa)). Asp94 is a catalytic residue. The cysteines at positions 107 and 114 are disulfide-linked. 2 N-linked (GlcNAc...) asparagine glycosylation sites follow: Asn131 and Asn249. The cysteines at positions 272 and 276 are disulfide-linked. Residue Asp281 is part of the active site. Residues Cys315 and Cys352 are joined by a disulfide bond.

Belongs to the peptidase A1 family. In terms of assembly, monomer.

The protein resides in the lysosome. The enzyme catalyses Specificity similar to, but narrower than, that of pepsin A. Does not cleave the 4-Gln-|-His-5 bond in B chain of insulin.. Inhibited by pepstatin. Its function is as follows. Acid protease active in intracellular protein breakdown. The sequence is that of Cathepsin D (ctsd) from Chionodraco hamatus (Antarctic teleost icefish).